The following is a 423-amino-acid chain: MEKIFKILANLKFAIALLLLISITITFGSIIEQDQTLDYYKQNYPLTNPIGGFLTWKVINMFQLNHIYKNFWFISLLLSLGISLIACTFFQQFPGIKFSRRCYFSNNPRKTDFQTQLKTNLSRNIIYTIISEGYFVFQQKKNFYGTKGIIGRIAPVFVHLSIILILLGSIFASLGGFNSQELIGKGEIFHIQNVTSSGPLTKLSQQAIRVNDFWINYYPNNKIKQFYSNLSIINGDGQEVRSKTISVNKPLIYKDLTFYQTDWNLLGLRISHNNKNFQIPVIQTTQNLNKVWLTWLPLESNTSKNLSGETIIINNYKGTIYIYDNNGQLNKKIELSNFIENKNYKLIEFLSVTGIQIKSDPGILFIYFGFGFLMVSTILSYLSFSQVWLGIDYLEQNNIKLTVNAKTNRTKVLALTVRIQPFL.

3 helical membrane-spanning segments follow: residues 11–31, 70–90, and 153–173; these read LKFA…GSII, NFWF…CTFF, and IAPV…IFAS.

This sequence belongs to the Ccs1/CcsB family. As to quaternary structure, may interact with CcsA.

The protein resides in the plastid. It is found in the chloroplast thylakoid membrane. Functionally, required during biogenesis of c-type cytochromes (cytochrome c6 and cytochrome f) at the step of heme attachment. The protein is Cytochrome c biogenesis protein Ccs1 of Heterosigma akashiwo (strain NIES-293 / 8280G21-1).